Here is an 839-residue protein sequence, read N- to C-terminus: Periplasmic nitrate reductase (839 aa).

Positions methionine 1–alanine 34 form a signal peptide, tat-type signal. The 57-residue stretch at isoleucine 46–aspartate 102 folds into the 4Fe-4S Mo/W bis-MGD-type domain. Cysteine 53, cysteine 56, cysteine 60, and cysteine 88 together coordinate [4Fe-4S] cluster. Residues lysine 90, glutamine 157, asparagine 182, cysteine 186, tryptophan 219 to methionine 226, serine 250 to histidine 254, glutamine 269 to aspartate 271, methionine 379, glutamine 383, asparagine 489, serine 515 to aspartate 516, lysine 538, aspartate 565, and threonine 729 to threonine 738 each bind Mo-bis(molybdopterin guanine dinucleotide). Phenylalanine 805 is a substrate binding site. Residues asparagine 813 and lysine 830 each coordinate Mo-bis(molybdopterin guanine dinucleotide).

Belongs to the prokaryotic molybdopterin-containing oxidoreductase family. NasA/NapA/NarB subfamily. Component of the periplasmic nitrate reductase NapAB complex composed of NapA and NapB. The cofactor is [4Fe-4S] cluster. Requires Mo-bis(molybdopterin guanine dinucleotide) as cofactor. In terms of processing, predicted to be exported by the Tat system. The position of the signal peptide cleavage has not been experimentally proven.

It localises to the periplasm. The catalysed reaction is 2 Fe(II)-[cytochrome] + nitrate + 2 H(+) = 2 Fe(III)-[cytochrome] + nitrite + H2O. Catalytic subunit of the periplasmic nitrate reductase complex NapAB. Receives electrons from NapB and catalyzes the reduction of nitrate to nitrite. This Laribacter hongkongensis (strain HLHK9) protein is Periplasmic nitrate reductase.